A 265-amino-acid chain; its full sequence is V0 assembly protein 1 (265 aa).

Positions 1–24 are cleaved as a signal peptide; it reads MVFGQLYALFIFTLSCCISKTVQA. Topologically, residues 25 to 223 are vacuolar; it reads DSSKESSSFI…ILSSIWTEGL (199 aa). N-linked (GlcNAc...) asparagine glycans are attached at residues asparagine 69, asparagine 104, and asparagine 172. Residues 224-244 form a helical membrane-spanning segment; that stretch reads LMCLIVSALLLFILIVALSWI. Residues 245-265 lie on the Cytoplasmic side of the membrane; it reads SNLDITYGALEKSTNPIKKNN. Positions 262 to 265 match the ER retention motif motif; it reads KKNN.

The protein belongs to the VOA1 family. In terms of assembly, V-ATPase is a heteromultimeric enzyme composed of a peripheral catalytic V1 complex (components A to H) attached to an integral membrane V0 proton pore complex (components: a, c, c', c'', d, e, f and VOA1). Interacts with VMA21. Associates with the assembling V0 complex.

It localises to the vacuole membrane. The protein resides in the endoplasmic reticulum membrane. In terms of biological role, accessory component of the V0 complex of vacuolar(H+)-ATPase (V-ATPase), a multisubunit enzyme composed of a peripheral complex (V1) that hydrolyzes ATP and a membrane integral complex (V0) that translocates protons. V-ATPase is responsible for acidifying and maintaining the pH of intracellular compartments. Functions with VMA21 in assembly of the V0 complex. The polypeptide is V0 assembly protein 1 (VOA1) (Saccharomyces cerevisiae (strain ATCC 204508 / S288c) (Baker's yeast)).